The following is a 361-amino-acid chain: Putative F-box protein At3g19560 (361 aa).

The F-box domain maps to 3 to 49 (MTMMSDISQDLLEEILSRVPITSLRAVKSTCKRWKDLLNDPSFSKKY).

The protein is Putative F-box protein At3g19560 of Arabidopsis thaliana (Mouse-ear cress).